A 279-amino-acid polypeptide reads, in one-letter code: Shikimate dehydrogenase (NADP(+)) (279 aa).

Shikimate is bound by residues 20-22 (SRS) and threonine 67. Lysine 71 acts as the Proton acceptor in catalysis. An NADP(+)-binding site is contributed by aspartate 83. Shikimate-binding residues include asparagine 92 and aspartate 108. NADP(+) contacts are provided by residues 134-138 (GAGGA) and leucine 223. Shikimate is bound at residue tyrosine 225. Glycine 246 contacts NADP(+).

It belongs to the shikimate dehydrogenase family. As to quaternary structure, homodimer.

It carries out the reaction shikimate + NADP(+) = 3-dehydroshikimate + NADPH + H(+). Its pathway is metabolic intermediate biosynthesis; chorismate biosynthesis; chorismate from D-erythrose 4-phosphate and phosphoenolpyruvate: step 4/7. Involved in the biosynthesis of the chorismate, which leads to the biosynthesis of aromatic amino acids. Catalyzes the reversible NADPH linked reduction of 3-dehydroshikimate (DHSA) to yield shikimate (SA). The protein is Shikimate dehydrogenase (NADP(+)) of Cereibacter sphaeroides (strain ATCC 17023 / DSM 158 / JCM 6121 / CCUG 31486 / LMG 2827 / NBRC 12203 / NCIMB 8253 / ATH 2.4.1.) (Rhodobacter sphaeroides).